The following is a 303-amino-acid chain: tRNA dimethylallyltransferase (303 aa).

9 to 16 (GPTASGKS) contacts ATP. 11–16 (TASGKS) lines the substrate pocket. Residues 34 to 37 (DSKQ) form an interaction with substrate tRNA region.

The protein belongs to the IPP transferase family. Monomer. Mg(2+) is required as a cofactor.

It carries out the reaction adenosine(37) in tRNA + dimethylallyl diphosphate = N(6)-dimethylallyladenosine(37) in tRNA + diphosphate. Functionally, catalyzes the transfer of a dimethylallyl group onto the adenine at position 37 in tRNAs that read codons beginning with uridine, leading to the formation of N6-(dimethylallyl)adenosine (i(6)A). The polypeptide is tRNA dimethylallyltransferase (Ehrlichia chaffeensis (strain ATCC CRL-10679 / Arkansas)).